We begin with the raw amino-acid sequence, 403 residues long: Putative F-box/LRR-repeat protein At5g38386 (403 aa).

An F-box domain is found at 1 to 47; sequence MDHLSNLPDELLCHIMSFLTTKEAALISVLSKRWRNLIAFVPNLDIF. 6 LRR repeats span residues 64–91, 93–119, 131–156, 175–203, 243–274, and 275–300; these read IRQL…SLCC, GGSY…DLSM, VFEN…VMNH, LKTL…SYSD, YLYF…SIKS, and VESR…VLEA.

This is Putative F-box/LRR-repeat protein At5g38386 from Arabidopsis thaliana (Mouse-ear cress).